The sequence spans 219 residues: Swarming motility regulation protein RssB (219 aa).

A Response regulatory domain is found at 2 to 116 (NILLVEDDLQ…ELISRVKAVN (115 aa)). Asp-51 is subject to 4-aspartylphosphate. Residues 124–218 (SQTWSLGALY…VRGIGYLLKK (95 aa)) constitute a DNA-binding region (ompR/PhoB-type).

Its subcellular location is the cytoplasm. Functionally, member of the two-component regulatory system RssA/RssB involved in regulation of swarming motility which has been shown to be inhibited by saturated fatty acids. RssA/RssB regulates cellular fatty acid composition, hemolysin production and cell surface topography. RssA/RssB negatively regulates the activity of SlhBA. It can also act as a negative regulator for the control of the swarming initiation. RssB binds its own promoter. This is Swarming motility regulation protein RssB (rssB) from Serratia marcescens.